The following is a 190-amino-acid chain: MRGLRPALSTFLFLLLITGGVYPLLTTALGQWWFPWQANGSLIREGDTVRGSALIGQNFTGNGYFHGRPSATAEMPYNPQASGGSNLAVSNPELDKQIAARVAALRAANPDASTNVPVELVTASASGLDNNITPQAAAWQIPRVAKARNLSVEQLTQLIAKYSQQPLVKYIGQPVVNIVELNLALDKLDE.

The chain crosses the membrane as a helical span at residues 10 to 30 (TFLFLLLITGGVYPLLTTALG).

Belongs to the KdpC family. The system is composed of three essential subunits: KdpA, KdpB and KdpC.

It localises to the cell inner membrane. Its function is as follows. Part of the high-affinity ATP-driven potassium transport (or Kdp) system, which catalyzes the hydrolysis of ATP coupled with the electrogenic transport of potassium into the cytoplasm. This subunit acts as a catalytic chaperone that increases the ATP-binding affinity of the ATP-hydrolyzing subunit KdpB by the formation of a transient KdpB/KdpC/ATP ternary complex. This is Potassium-transporting ATPase KdpC subunit from Escherichia coli O6:H1 (strain CFT073 / ATCC 700928 / UPEC).